We begin with the raw amino-acid sequence, 607 residues long: Pyruvate decarboxylase 1 (607 aa).

Positions 69 and 156 each coordinate substrate. The segment at 434-516 is thiamine pyrophosphate binding; sequence DSWFNCQKLK…FLINNGGYTI (83 aa). Aspartate 484, asparagine 511, and glycine 513 together coordinate Mg(2+). Glutamate 517 contributes to the substrate binding site.

This sequence belongs to the TPP enzyme family. In terms of assembly, homotetramer. It depends on a metal cation as a cofactor. Requires thiamine diphosphate as cofactor. As to expression, highly expressed in seeds, and at lower levels in roots and siliques.

The catalysed reaction is a 2-oxocarboxylate + H(+) = an aldehyde + CO2. In terms of biological role, may play a role in ethanolic fermentation during anoxia. The protein is Pyruvate decarboxylase 1 (PDC1) of Arabidopsis thaliana (Mouse-ear cress).